The sequence spans 480 residues: 2-succinylbenzoate--CoA ligase (480 aa).

It belongs to the ATP-dependent AMP-binding enzyme family. MenE subfamily.

It carries out the reaction 2-succinylbenzoate + ATP + CoA = 2-succinylbenzoyl-CoA + AMP + diphosphate. The protein operates within quinol/quinone metabolism; 1,4-dihydroxy-2-naphthoate biosynthesis; 1,4-dihydroxy-2-naphthoate from chorismate: step 5/7. It participates in quinol/quinone metabolism; menaquinone biosynthesis. Functionally, converts 2-succinylbenzoate (OSB) to 2-succinylbenzoyl-CoA (OSB-CoA). In Oceanobacillus iheyensis (strain DSM 14371 / CIP 107618 / JCM 11309 / KCTC 3954 / HTE831), this protein is 2-succinylbenzoate--CoA ligase.